The chain runs to 274 residues: 16S rRNA (guanine(1405)-N(7))-methyltransferase (274 aa).

Residues 102-108 (HISTRER), Ala133, Asp156, 182-183 (DL), Leu198, and Gln207 contribute to the S-adenosyl-L-methionine site.

It belongs to the methyltransferase superfamily. Aminoglycoside resistance family.

It catalyses the reaction guanosine(1405) in 16S rRNA + S-adenosyl-L-methionine = N(7)-methylguanosine(1405) in 16S rRNA + S-adenosyl-L-homocysteine. Functionally, specifically methylates the N(7) position of guanine 1405 in 16S rRNA. Confers resistance to various aminoglycosides, including gentamicin, kanamycin and sisomicin. The protein is 16S rRNA (guanine(1405)-N(7))-methyltransferase (sgm) of Micromonospora zionensis.